The following is a 711-amino-acid chain: Denticleless protein homolog B (711 aa).

3 WD repeats span residues 47-89 (GRAV…MQRL), 96-135 (AHTN…LIGE), and 138-178 (GHQC…KDGF). The short motif at 168–171 (WDTR) is the DDB1-binding motif element. Positions 197–204 (PSKVKKRK) match the Nuclear localization signal motif. WD repeat units follow at residues 215–254 (DSQQ…STYR), 270–309 (TRKL…TDPV), 314–355 (GHQN…AAPI), and 359–398 (GHCQ…SEDS). The DDB1-binding motif signature appears at 244–247 (WDLR). Disordered stretches follow at residues 473–524 (QTPK…AFTP) and 601–698 (EFDQ…TPGS). Composition is skewed to polar residues over residues 504-516 (TPKS…SKTP) and 606-627 (LSPS…TLSP). Basic and acidic residues predominate over residues 631-642 (MKSDFVDKENSS). The segment covering 658–675 (DNSSPQFKSSSSPSSRNS) has biased composition (low complexity). Positions 684–697 (NAPNSPVSVPTTPG) are enriched in polar residues.

It belongs to the WD repeat cdt2 family. As to quaternary structure, component of the DCX(DTL) E3 ubiquitin ligase complex, at least composed of cul4 (cul4a or cul4b), ddb1, dtl/cdt2 and rbx1.

The protein resides in the nucleus. It localises to the cytoplasm. Its subcellular location is the cytoskeleton. It is found in the microtubule organizing center. The protein localises to the centrosome. The protein resides in the chromosome. It participates in protein modification; protein ubiquitination. Substrate-specific adapter of a DCX (DDB1-CUL4-X-box) E3 ubiquitin-protein ligase complex required for cell cycle control, DNA damage response and translesion DNA synthesis. The DCX(DTL) complex, also named CRL4(CDT2) complex, mediates the polyubiquitination and subsequent degradation of CDT1, CDKN1A/p21(CIP1), KMT5A and SDE2. CDT1 degradation in response to DNA damage is necessary to ensure proper cell cycle regulation of DNA replication. CDKN1A/p21(CIP1) degradation during S phase or following UV irradiation is essential to control replication licensing. KMT5A degradation is also important for a proper regulation of mechanisms such as TGF-beta signaling, cell cycle progression, DNA repair and cell migration. Most substrates require their interaction with PCNA for their polyubiquitination: substrates interact with PCNA via their PIP-box, and those containing the 'K+4' motif in the PIP box, recruit the DCX(DTL) complex, leading to their degradation. In undamaged proliferating cells, the DCX(DTL) complex also promotes the 'Lys-164' monoubiquitination of PCNA, thereby being involved in PCNA-dependent translesion DNA synthesis. May play a role in the regulation of the circadian clock. In Xenopus laevis (African clawed frog), this protein is Denticleless protein homolog B (dtl-b).